A 343-amino-acid chain; its full sequence is tRNA N6-adenosine threonylcarbamoyltransferase (343 aa).

2 residues coordinate Fe cation: histidine 108 and histidine 112. Substrate-binding positions include 129–133 (LISGG), aspartate 161, glutamate 178, and serine 258. Residue aspartate 286 coordinates Fe cation.

It belongs to the KAE1 / TsaD family. The cofactor is Fe(2+).

It localises to the cytoplasm. The enzyme catalyses L-threonylcarbamoyladenylate + adenosine(37) in tRNA = N(6)-L-threonylcarbamoyladenosine(37) in tRNA + AMP + H(+). In terms of biological role, required for the formation of a threonylcarbamoyl group on adenosine at position 37 (t(6)A37) in tRNAs that read codons beginning with adenine. Is probably involved in the transfer of the threonylcarbamoyl moiety of threonylcarbamoyl-AMP (TC-AMP) to the N6 group of A37. The polypeptide is tRNA N6-adenosine threonylcarbamoyltransferase (Pyrobaculum aerophilum (strain ATCC 51768 / DSM 7523 / JCM 9630 / CIP 104966 / NBRC 100827 / IM2)).